The sequence spans 292 residues: Phosphatidylglycerol--prolipoprotein diacylglyceryl transferase (292 aa).

A run of 7 helical transmembrane segments spans residues 25–45 (ITLH…WWYA), 70–90 (FVVW…VLVW), 102–122 (IIAV…IIIA), 138–158 (FDII…CNFI), 193–213 (FMEG…FKAF), 217–237 (GTVS…SEVY), and 255–275 (GFTY…YLLL). R153 contacts a 1,2-diacyl-sn-glycero-3-phospho-(1'-sn-glycerol).

Belongs to the Lgt family.

The protein resides in the cell inner membrane. The enzyme catalyses L-cysteinyl-[prolipoprotein] + a 1,2-diacyl-sn-glycero-3-phospho-(1'-sn-glycerol) = an S-1,2-diacyl-sn-glyceryl-L-cysteinyl-[prolipoprotein] + sn-glycerol 1-phosphate + H(+). It participates in protein modification; lipoprotein biosynthesis (diacylglyceryl transfer). Catalyzes the transfer of the diacylglyceryl group from phosphatidylglycerol to the sulfhydryl group of the N-terminal cysteine of a prolipoprotein, the first step in the formation of mature lipoproteins. This Bartonella tribocorum (strain CIP 105476 / IBS 506) protein is Phosphatidylglycerol--prolipoprotein diacylglyceryl transferase.